Consider the following 366-residue polypeptide: Elongation factor Ts, mitochondrial (366 aa).

Residues 1 to 50 (MAWSQSARKPMIGLLFRAQQHSARGYSYSAFQAHLSSSNVDQSATLLRRF) constitute a mitochondrion transit peptide.

It belongs to the EF-Ts family.

Its subcellular location is the mitochondrion. Functionally, associates with the EF-Tu.GDP complex and induces the exchange of GDP to GTP. It remains bound to the aminoacyl-tRNA.EF-Tu.GTP complex up to the GTP hydrolysis stage on the ribosome. This chain is Elongation factor Ts, mitochondrial, found in Oryza sativa subsp. japonica (Rice).